The chain runs to 364 residues: MRLYLNVFYSQKNAPNSVVSNIISSSFNDRLLQALQCRNNSRPPVWLMRQAGRHLASYRALREKYSFLDMCHNPELIAEVTLLPIEAYQVDAAILFSDILVIPEALKVGVRFEDKVGPIIEKPITNLHDIEKLAMPEDLTSLEFVKEGIRCLQPRLNVPLIGFCGAPFTVASYMIEGKTSRDFKKIKHWMYHEPQGFHTLLRKIADWSIAYLNMQIDAGVHALQIFDSWANTLSYRQFQEFSLNYLKYILKGLKKDIPLILFCRGSSVFGPDLASIKPAAVGLDWNCRVKRMRDVIPYPIALQGNLDPDLLYAPLPKIREEVNALLDEMEGDRGFILNLGHGIFPDVSEEAVRTLVETVRERRG.

Residues R49–R53, D98, Y173, S228, and H341 contribute to the substrate site.

It belongs to the uroporphyrinogen decarboxylase family. As to quaternary structure, homodimer.

It is found in the cytoplasm. It carries out the reaction uroporphyrinogen III + 4 H(+) = coproporphyrinogen III + 4 CO2. The protein operates within porphyrin-containing compound metabolism; protoporphyrin-IX biosynthesis; coproporphyrinogen-III from 5-aminolevulinate: step 4/4. Its function is as follows. Catalyzes the decarboxylation of four acetate groups of uroporphyrinogen-III to yield coproporphyrinogen-III. This is Uroporphyrinogen decarboxylase from Protochlamydia amoebophila (strain UWE25).